A 64-amino-acid polypeptide reads, in one-letter code: Chassatide C7 (64 aa).

Positions 1 to 35 are cleaved as a propeptide — removed in mature form; that stretch reads VLVASLVMLEAQSSDTIQVPDWGKRLLMNHDSNRV. Disulfide bonds link C39–C55, C43–C57, and C48–C62.

In terms of tissue distribution, expressed in fruit, pedicel, root and stem but not in leaf (at protein level).

Its function is as follows. Probably participates in a plant defense mechanism. Active against E.coli ATTC25922 but not against S.aureus ATCC 12600 or S.epidermidis ATCC 14990. Has cytotoxic and hemolytic activity. The protein is Chassatide C7 of Chassalia chartacea (Chassalia curviflora).